Reading from the N-terminus, the 242-residue chain is Myb-related protein MYBAS2 (242 aa).

HTH myb-type domains are found at residues 5–61 (REEI…HPGL) and 62–112 (KRGR…RKKA). Residues 33 to 57 (WDFIAKVSGLNRTGKSCRLRWVNYL) constitute a DNA-binding region (H-T-H motif). The short motif at 62 to 65 (KRGR) is the Bipartite nuclear localization signal 1 element. A DNA-binding region (H-T-H motif) is located at residues 85–108 (WSRIARRLPGRTDNEIKNYWRTHM). Residues 109–117 (RKKAQERKS) carry the Bipartite nuclear localization signal 2 motif. The disordered stretch occupies residues 110 to 133 (KKAQERKSNMSPSSSSSSLTYQSC). The segment covering 118-133 (NMSPSSSSSSLTYQSC) has biased composition (low complexity).

It localises to the nucleus. Its function is as follows. Transcription factor. The protein is Myb-related protein MYBAS2 (MYBAS2) of Oryza sativa subsp. japonica (Rice).